A 97-amino-acid chain; its full sequence is uncharacterized protein (97 aa).

This is an uncharacterized protein from Methanothermococcus thermolithotrophicus (Methanococcus thermolithotrophicus).